The chain runs to 375 residues: Beta-1,3-N-acetylglucosaminyltransferase lunatic fringe (375 aa).

Topologically, residues 1 to 8 (MLKNWGKK) are cytoplasmic. Residues 9–29 (LLLSIVGATLTCLLVLVVDQQ) form a helical; Signal-anchor for type II membrane protein membrane-spanning segment. The Lumenal portion of the chain corresponds to 30-375 (SRHMLETQSD…TPWCPWKAAY (346 aa)). Residues 53–73 (DLDPANPGDGGDPANSAQDSG) form a disordered region. Arg-125 is a substrate binding site. N-linked (GlcNAc...) asparagine glycosylation occurs at Asn-163. 2 cysteine pairs are disulfide-bonded: Cys-164/Cys-175 and Cys-193/Cys-256. A substrate-binding site is contributed by Asp-197. Asp-198 contributes to the Mn(2+) binding site. Asp-286 is a catalytic residue. Residue His-310 coordinates Mn(2+). A disulfide bridge links Cys-360 with Cys-369.

It belongs to the glycosyltransferase 31 family. Requires Mn(2+) as cofactor. Co(2+) serves as cofactor. A soluble form may be derived from the membrane form by proteolytic processing. As to expression, detected in the neural tube, the eye and the otic vesicle, expression coincides with the region that produces the medial, intermediate and lateral neurons.

The protein localises to the golgi apparatus membrane. The catalysed reaction is 3-O-(alpha-L-fucosyl)-L-threonyl-[EGF-like domain protein] + UDP-N-acetyl-alpha-D-glucosamine = 3-O-(N-acetyl-beta-D-glucosaminyl-(1-&gt;3)-alpha-L-fucosyl)-L-threonyl-[EGF-like domain protein] + UDP + H(+). It catalyses the reaction 3-O-(alpha-L-fucosyl)-L-seryl-[EGF-like domain protein] + UDP-N-acetyl-alpha-D-glucosamine = 3-O-(N-acetyl-beta-D-glucosaminyl-(1-&gt;3)-alpha-L-fucosyl)-L-seryl-[EGF-like domain protein] + UDP + H(+). Glycosyltransferase that initiates the elongation of O-linked fucose residues attached to EGF-like repeats in the extracellular domain of Notch molecules. Essential mediator of somite segmentation and patterning. May be involved in mesoderm development. The sequence is that of Beta-1,3-N-acetylglucosaminyltransferase lunatic fringe (lfng) from Xenopus laevis (African clawed frog).